A 345-amino-acid chain; its full sequence is Delta(1)-pyrroline-2-carboxylate reductase (345 aa).

The active-site Charge relay system is Ser-47. The active-site Proton donor is the His-48. Arg-52 contributes to the substrate binding site. 121–125 (HFSAL) serves as a coordination point for NADP(+). Thr-161 serves as a coordination point for substrate. 179-181 (DFA) is an NADP(+) binding site. 187–188 (RG) contacts substrate. Catalysis depends on Glu-189, which acts as the Charge relay system. NADP(+) contacts are provided by residues 230-231 (HK) and 305-311 (RLPSGRR).

Belongs to the LDH2/MDH2 oxidoreductase family. As to quaternary structure, homodimer.

The enzyme catalyses L-proline + NAD(+) = 1-pyrroline-2-carboxylate + NADH + H(+). It catalyses the reaction L-proline + NADP(+) = 1-pyrroline-2-carboxylate + NADPH + H(+). Its function is as follows. Catalyzes the reduction of Delta(1)-pyrroline-2-carboxylate (Pyr2C) to L-proline, using NADPH as the electron donor. Is likely involved in a degradation pathway that converts trans-3-hydroxy-L-proline (t3LHyp) to L-proline, which would allow A.tumefaciens to grow on t3LHyp as a sole carbon source. The sequence is that of Delta(1)-pyrroline-2-carboxylate reductase from Agrobacterium fabrum (strain C58 / ATCC 33970) (Agrobacterium tumefaciens (strain C58)).